The primary structure comprises 262 residues: MMYKAVFSDFNGTLLTSQHTISPRTVVVIKRLTANGIPFVPISARSPLGILPYWKQLETNNVLVAFSGALILNQNLEPIYSVQIEPKDILEINTVLAEHPLLGVNYYTNNDCHARDVENKWVIYERSVTKIEIHPFDEVATRSPHKIQIIGEAEEIIEIEVLLKEKFPHLSICRSHANFLEVMHKSATKGSAVRFLEDYFGVQTNEVIAFGDNFNDLDMLEHVGLGVAMGNAPNEIKQAANVVTATNNEDGLALILEEKFPE.

Asp9 acts as the Nucleophile in catalysis. Mg(2+) contacts are provided by Asp9 and Asn11. Residues 43–44 and Lys189 contribute to the phosphate site; that span reads SA. A Mg(2+)-binding site is contributed by Asp212. Asn215 lines the phosphate pocket.

The protein belongs to the HAD-like hydrolase superfamily. Cof family. The cofactor is Mg(2+).

This Haemophilus influenzae (strain ATCC 51907 / DSM 11121 / KW20 / Rd) protein is Putative phosphatase HI_0003.